We begin with the raw amino-acid sequence, 477 residues long: Probable ribonuclease FAU-1 (477 aa).

The protein belongs to the FAU-1 family.

Probable RNase involved in rRNA stability through maturation and/or degradation of precursor rRNAs. Binds to RNA in loop regions with AU-rich sequences. This Staphylothermus marinus (strain ATCC 43588 / DSM 3639 / JCM 9404 / F1) protein is Probable ribonuclease FAU-1.